The primary structure comprises 330 residues: MENNIDLNVYFCFVNRPCTGGDFVNLDHVRTLRKLGINASILLAGNQSEEIVNSFGSLPVVILNEEIEFSSQDIFIVPEVMQVLYDLASKMTVFPRMIMHNQNPFYTGYGFLSAQHINEHRLERIIVPSSYTKYKLQEIGVTKPIDIIHPYIPDYFKPAEKQREVIQIAFSRRKRSAEFDIFKFYFLSLYSHKHSVNFVNIQGLTREEVAKVMSEAAIFISFAERESLGLMTLEAMASGCHVIGFSGYTDIYNNEVIDDSVGDWIGEGEYTLFAQKVCQAIDDFVNGKMNPKIENGLRLIEQRFRIRHFEQEVKRVYGNIFDYDLENSRS.

Belongs to the glycosyltransferase group 1 family. It depends on Does not require a metal cofactor. as a cofactor.

The protein resides in the cytoplasm. It participates in protein modification; protein glycosylation. Its function is as follows. Catalyzes the transfer of a glucose moiety from UDP-glucose to another glucose that is N-linked to an asparagine within a peptide or protein. Can act in a repetitive manner, and this way it elongates the N-linked glucose by a glycan chain consisting of several alpha-1-&gt;6 linked glucose residues. Is able to add up to six glucose units in vitro. Cannot use UDP-Gal, UDP-GlcNAc or UDP-GalNAc as a substrate donor. The protein is Alpha-1,6-glucosyltransferase of Actinobacillus pleuropneumoniae serotype 7 (strain AP76).